We begin with the raw amino-acid sequence, 429 residues long: Glutamate-1-semialdehyde 2,1-aminomutase (429 aa).

The residue at position 267 (Lys-267) is an N6-(pyridoxal phosphate)lysine.

It belongs to the class-III pyridoxal-phosphate-dependent aminotransferase family. HemL subfamily. As to quaternary structure, homodimer. Pyridoxal 5'-phosphate is required as a cofactor.

It localises to the cytoplasm. It catalyses the reaction (S)-4-amino-5-oxopentanoate = 5-aminolevulinate. It participates in porphyrin-containing compound metabolism; protoporphyrin-IX biosynthesis; 5-aminolevulinate from L-glutamyl-tRNA(Glu): step 2/2. This Xanthomonas euvesicatoria pv. vesicatoria (strain 85-10) (Xanthomonas campestris pv. vesicatoria) protein is Glutamate-1-semialdehyde 2,1-aminomutase.